Here is a 369-residue protein sequence, read N- to C-terminus: Maltose/maltodextrin import ATP-binding protein MalK (369 aa).

An ABC transporter domain is found at 4–234 (VQLRNVTKAW…PADRFVAGFI (231 aa)). 36-43 (GPSGCGKS) lines the ATP pocket.

The protein belongs to the ABC transporter superfamily. Maltooligosaccharide importer (TC 3.A.1.1.1) family. In terms of assembly, the complex is composed of two ATP-binding proteins (MalK), two transmembrane proteins (MalG and MalK) and a solute-binding protein (MalE).

It is found in the cell inner membrane. The enzyme catalyses D-maltose(out) + ATP + H2O = D-maltose(in) + ADP + phosphate + H(+). Part of the ABC transporter complex MalEFGK involved in maltose/maltodextrin import. Responsible for energy coupling to the transport system. The protein is Maltose/maltodextrin import ATP-binding protein MalK of Salmonella paratyphi A (strain ATCC 9150 / SARB42).